The following is a 384-amino-acid chain: Sialyltransferase-like protein 3 (384 aa).

Over 1-5 the chain is Cytoplasmic; sequence MKRRH. The helical; Signal-anchor for type II membrane protein transmembrane segment at 6–26 threads the bilayer; it reads WSHPSCGLLLLVAVFCLLLVF. The Lumenal segment spans residues 27-384; sequence RCSQLRHSGD…FRLPPVSFYR (358 aa). Residue asparagine 241 is glycosylated (N-linked (GlcNAc...) asparagine).

This sequence belongs to the glycosyltransferase 29 family.

Its subcellular location is the golgi apparatus membrane. In terms of biological role, possesses sialyltransferase-like activity in vitro. Transfers sialic acid to the glycoprotein asialofetuin. The transferred sialic acid is linked to galactose of Gal-beta-1,3-GalNAc through alpha-2,6-linkage. The sequence is that of Sialyltransferase-like protein 3 from Oryza sativa subsp. indica (Rice).